The chain runs to 232 residues: Small ribosomal subunit protein uS3 (232 aa).

Residues 39 to 107 (VRQFLIKELA…PAQINIAEVR (69 aa)) enclose the KH type-2 domain.

This sequence belongs to the universal ribosomal protein uS3 family. Part of the 30S ribosomal subunit. Forms a tight complex with proteins S10 and S14.

In terms of biological role, binds the lower part of the 30S subunit head. Binds mRNA in the 70S ribosome, positioning it for translation. This is Small ribosomal subunit protein uS3 from Serratia proteamaculans (strain 568).